A 163-amino-acid chain; its full sequence is MDSSEDNPTWTLESLKTSIDDASQAMQVATQLSEMLATNLSNLTLNPSIKLPYLPEYPSQLTGQLPSEKTPHRRRGVRTVLSERRYRMQKLIESLRLRYAKGIPRSDSQRQLQQQEDTEIRSRVRRFQCTCSYCQFKRNPSDDNYENYYNTTYSNYAMESNES.

Preferentially expressed in oocyte.

The protein resides in the nucleus. It is found in the cytoplasm. Primordial germ cell (PGCs)-specific protein involved in epigenetic chromatin reprogramming in the zygote following fertilization. In zygotes, DNA demethylation occurs selectively in the paternal pronucleus before the first cell division, while the adjacent maternal pronucleus and certain paternally-imprinted loci are protected from this process. Participates in protection of DNA methylation in the maternal pronucleus by preventing conversion of 5mC to 5hmC: specifically recognizes and binds histone H3 dimethylated at 'Lys-9' (H3K9me2) on maternal genome, and protects maternal genome from TET3-mediated conversion to 5hmC and subsequent DNA demethylation. Does not bind paternal chromatin, which is mainly packed into protamine and does not contain much H3K9me2 mark. Also protects imprinted loci that are marked with H3K9me2 in mature sperm from DNA demethylation in early embryogenesis. May be important for the totipotent/pluripotent states continuing through preimplantation development. Also involved in chromatin condensation in oocytogenesis. The chain is Developmental pluripotency-associated protein 3 (DPPA3) from Bos taurus (Bovine).